A 619-amino-acid polypeptide reads, in one-letter code: Zinc finger CCCH domain-containing protein 67 (619 aa).

2 ANK repeats span residues 52–81 (EPLT…LVDP) and 88–120 (SLST…DPAL). 2 C3H1-type zinc fingers span residues 213–241 (HYSC…HGVF) and 249–273 (QYRT…HTPD). The tract at residues 308–341 (SPGSSSFTPPLSPSAGGGGGGGGGSGGGGAWPQQ) is disordered. The segment covering 322–337 (AGGGGGGGGGSGGGGA) has biased composition (gly residues).

The polypeptide is Zinc finger CCCH domain-containing protein 67 (Oryza sativa subsp. japonica (Rice)).